We begin with the raw amino-acid sequence, 1528 residues long: Zinc finger FYVE domain-containing protein 16 (1528 aa).

Residue Ser-120 is modified to Phosphoserine. A disordered region spans residues 629–664; it reads TQAVGGARPKQLLSLPPGTRSSKELNKPDVVDVPES. Over residues 649-658 the composition is skewed to basic and acidic residues; it reads SSKELNKPDV. The segment at 735–793 adopts an FYVE-type zinc-finger fold; it reads DSEAPNCMNCQVKFTFTKRRHHCRACGKVFCGVCCNRKCKLQYLEKEARVCVICYETIN. Cys-741, Cys-744, Cys-757, Cys-760, Cys-765, Cys-768, Cys-785, and Cys-788 together coordinate Zn(2+). Phosphoserine occurs at positions 803, 833, 884, and 927. The disordered stretch occupies residues 819–849; the sequence is TDQPLQETQTSSTPSPTTLPISALKQPNVEG. Residues 821 to 838 show a composition bias toward low complexity; it reads QPLQETQTSSTPSPTTLP. The segment at 928–949 is disordered; that stretch reads PTCHTAPVERLPGNTGTEGLPM.

In terms of assembly, interacts (via C-terminus) with TOM1 (via C-terminus); interaction is required to target TOM1 to endosomes. Does not interact with TOM1L1 or TOM1L2.

The protein resides in the cytoplasm. The protein localises to the early endosome membrane. May be involved in regulating membrane trafficking in the endosomal pathway. Overexpression induces endosome aggregation. Required to target TOM1 to endosomes. This Mus musculus (Mouse) protein is Zinc finger FYVE domain-containing protein 16 (Zfyve16).